A 259-amino-acid polypeptide reads, in one-letter code: DNA repair protein RecO (259 aa).

It belongs to the RecO family.

Functionally, involved in DNA repair and RecF pathway recombination. This is DNA repair protein RecO from Chloroherpeton thalassium (strain ATCC 35110 / GB-78).